The following is a 317-amino-acid chain: Protoheme IX farnesyltransferase (317 aa).

A run of 6 helical transmembrane segments spans residues 25-45 (FFAL…LVGM), 54-74 (PVIG…SGCL), 117-137 (LMLG…TIVF), 167-189 (IGQA…IIFI), 244-264 (LGFG…AMLV), and 281-301 (AAMS…SALL).

It belongs to the UbiA prenyltransferase family. Protoheme IX farnesyltransferase subfamily.

It is found in the cell inner membrane. It catalyses the reaction heme b + (2E,6E)-farnesyl diphosphate + H2O = Fe(II)-heme o + diphosphate. The protein operates within porphyrin-containing compound metabolism; heme O biosynthesis; heme O from protoheme: step 1/1. Converts heme B (protoheme IX) to heme O by substitution of the vinyl group on carbon 2 of heme B porphyrin ring with a hydroxyethyl farnesyl side group. The protein is Protoheme IX farnesyltransferase of Methylobacterium nodulans (strain LMG 21967 / CNCM I-2342 / ORS 2060).